The chain runs to 255 residues: 4-hydroxy-tetrahydrodipicolinate reductase (255 aa).

Residues 9-14, 89-91, and 115-118 contribute to the NAD(+) site; these read GFKGKM, GTT, and APNF. Catalysis depends on histidine 145, which acts as the Proton donor/acceptor. Histidine 146 contributes to the (S)-2,3,4,5-tetrahydrodipicolinate binding site. Lysine 149 functions as the Proton donor in the catalytic mechanism. 155–156 provides a ligand contact to (S)-2,3,4,5-tetrahydrodipicolinate; that stretch reads GT.

It belongs to the DapB family.

The protein localises to the cytoplasm. The catalysed reaction is (S)-2,3,4,5-tetrahydrodipicolinate + NAD(+) + H2O = (2S,4S)-4-hydroxy-2,3,4,5-tetrahydrodipicolinate + NADH + H(+). It carries out the reaction (S)-2,3,4,5-tetrahydrodipicolinate + NADP(+) + H2O = (2S,4S)-4-hydroxy-2,3,4,5-tetrahydrodipicolinate + NADPH + H(+). Its pathway is amino-acid biosynthesis; L-lysine biosynthesis via DAP pathway; (S)-tetrahydrodipicolinate from L-aspartate: step 4/4. Its function is as follows. Catalyzes the conversion of 4-hydroxy-tetrahydrodipicolinate (HTPA) to tetrahydrodipicolinate. The polypeptide is 4-hydroxy-tetrahydrodipicolinate reductase (Streptococcus sanguinis (strain SK36)).